The following is an 84-amino-acid chain: Putative membrane protein insertion efficiency factor (84 aa).

The protein belongs to the UPF0161 family.

It localises to the cell inner membrane. Functionally, could be involved in insertion of integral membrane proteins into the membrane. The chain is Putative membrane protein insertion efficiency factor from Shewanella amazonensis (strain ATCC BAA-1098 / SB2B).